We begin with the raw amino-acid sequence, 211 residues long: Small ribosomal subunit protein eS8 (211 aa).

Belongs to the eukaryotic ribosomal protein eS8 family.

This is Small ribosomal subunit protein eS8 (rps8) from Dictyostelium discoideum (Social amoeba).